A 116-amino-acid chain; its full sequence is MNLILLLVIGFLVFIGTYMILSLNLIRIVIGISIYTHAGNLIIMSMGHYSNKMTEPLIHGSNTNYVDPLLQAIVLTAIVIGFAMTAFLLVLVYRTYRVTKEANIDVLRGEEDENEQ.

The next 3 helical transmembrane spans lie at 3-23, 28-48, and 72-92; these read LILL…ILSL, IVIG…SMGH, and AIVL…LVLV.

This sequence belongs to the CPA3 antiporters (TC 2.A.63) subunit C family. In terms of assembly, may form a heterooligomeric complex that consists of seven subunits: mnhA2, mnhB2, mnhC2, mnhD2, mnhE2, mnhF2 and mnhG2.

Its subcellular location is the cell membrane. The polypeptide is Putative antiporter subunit mnhC2 (mnhC2) (Staphylococcus haemolyticus (strain JCSC1435)).